Reading from the N-terminus, the 368-residue chain is DNA replication and repair protein RecF (368 aa).

30–37 contacts ATP; it reads GNNAQGKT.

This sequence belongs to the RecF family.

It is found in the cytoplasm. In terms of biological role, the RecF protein is involved in DNA metabolism; it is required for DNA replication and normal SOS inducibility. RecF binds preferentially to single-stranded, linear DNA. It also seems to bind ATP. The sequence is that of DNA replication and repair protein RecF from Streptococcus pyogenes serotype M12 (strain MGAS9429).